Here is a 386-residue protein sequence, read N- to C-terminus: GTPase Obg (386 aa).

One can recognise an Obg domain in the interval 1–159 (MKFIDEARIE…RTLKLELKVL (159 aa)). One can recognise an OBG-type G domain in the interval 160–348 (ADVGLLGMPN…LTFAIMSYLD (189 aa)). GTP is bound by residues 166–173 (GMPNAGKS), 191–195 (FTTLH), 213–216 (DIPG), 284–287 (NKVD), and 329–331 (SAL). Residues Ser-173 and Thr-193 each contribute to the Mg(2+) site.

This sequence belongs to the TRAFAC class OBG-HflX-like GTPase superfamily. OBG GTPase family. Monomer. The cofactor is Mg(2+).

It localises to the cytoplasm. Functionally, an essential GTPase which binds GTP, GDP and possibly (p)ppGpp with moderate affinity, with high nucleotide exchange rates and a fairly low GTP hydrolysis rate. Plays a role in control of the cell cycle, stress response, ribosome biogenesis and in those bacteria that undergo differentiation, in morphogenesis control. The sequence is that of GTPase Obg from Chromobacterium violaceum (strain ATCC 12472 / DSM 30191 / JCM 1249 / CCUG 213 / NBRC 12614 / NCIMB 9131 / NCTC 9757 / MK).